The chain runs to 228 residues: Urease accessory protein UreF (228 aa).

This sequence belongs to the UreF family. As to quaternary structure, ureD, UreF and UreG form a complex that acts as a GTP-hydrolysis-dependent molecular chaperone, activating the urease apoprotein by helping to assemble the nickel containing metallocenter of UreC. The UreE protein probably delivers the nickel.

Its subcellular location is the cytoplasm. In terms of biological role, required for maturation of urease via the functional incorporation of the urease nickel metallocenter. The protein is Urease accessory protein UreF of Alkalilimnicola ehrlichii (strain ATCC BAA-1101 / DSM 17681 / MLHE-1).